The chain runs to 339 residues: Dihydroorotate dehydrogenase (quinone) (339 aa).

FMN contacts are provided by residues 61-65 and Thr-85; that span reads AGLDK. Substrate is bound at residue Lys-65. A substrate-binding site is contributed by 110-114; that stretch reads NRMGF. FMN is bound by residues Asn-138 and Asn-171. Asn-171 is a substrate binding site. Residue Ser-174 is the Nucleophile of the active site. Asn-176 lines the substrate pocket. Residues Lys-216 and Thr-244 each coordinate FMN. A substrate-binding site is contributed by 245–246; the sequence is NT. FMN contacts are provided by residues Gly-267, Gly-296, and 317–318; that span reads YS.

This sequence belongs to the dihydroorotate dehydrogenase family. Type 2 subfamily. In terms of assembly, monomer. It depends on FMN as a cofactor.

It is found in the cell membrane. The catalysed reaction is (S)-dihydroorotate + a quinone = orotate + a quinol. It functions in the pathway pyrimidine metabolism; UMP biosynthesis via de novo pathway; orotate from (S)-dihydroorotate (quinone route): step 1/1. Catalyzes the conversion of dihydroorotate to orotate with quinone as electron acceptor. In Teredinibacter turnerae (strain ATCC 39867 / T7901), this protein is Dihydroorotate dehydrogenase (quinone).